The following is a 191-amino-acid chain: Holliday junction branch migration complex subunit RuvA (191 aa).

The tract at residues 1–63 (MIRYLRGLVL…EEGLSLYGFP (63 aa)) is domain I. A domain II region spans residues 64–136 (DEENLALFEL…LKGKVPPHLL (73 aa)). Residues 136–140 (LAGEK) form a flexible linker region. Residues 141–191 (VESEAAEEAVMALAALGFKEAQARAVVLDLLAQNPKARAQDLIKEALKRLR) are domain III.

It belongs to the RuvA family. In terms of assembly, homotetramer. Forms an RuvA(8)-RuvB(12)-Holliday junction (HJ) complex. HJ DNA is sandwiched between 2 RuvA tetramers; dsDNA enters through RuvA and exits via RuvB. An RuvB hexamer assembles on each DNA strand where it exits the tetramer. Each RuvB hexamer is contacted by two RuvA subunits (via domain III) on 2 adjacent RuvB subunits; this complex drives branch migration. In the full resolvosome a probable DNA-RuvA(4)-RuvB(12)-RuvC(2) complex forms which resolves the HJ.

The protein resides in the cytoplasm. In terms of biological role, the RuvA-RuvB-RuvC complex processes Holliday junction (HJ) DNA during genetic recombination and DNA repair, while the RuvA-RuvB complex plays an important role in the rescue of blocked DNA replication forks via replication fork reversal (RFR). RuvA specifically binds to HJ cruciform DNA, conferring on it an open structure. The RuvB hexamer acts as an ATP-dependent pump, pulling dsDNA into and through the RuvAB complex. HJ branch migration allows RuvC to scan DNA until it finds its consensus sequence, where it cleaves and resolves the cruciform DNA. The chain is Holliday junction branch migration complex subunit RuvA from Thermus thermophilus (strain ATCC BAA-163 / DSM 7039 / HB27).